A 267-amino-acid chain; its full sequence is Hemin import ATP-binding protein HmuV (267 aa).

The ABC transporter domain maps to 3–243 (LEVRGIEVWR…ELVARVFGLR (241 aa)). 35–42 (GPNGAGKS) lines the ATP pocket.

The protein belongs to the ABC transporter superfamily. Heme (hemin) importer (TC 3.A.1.14.5) family. As to quaternary structure, the complex is composed of two ATP-binding proteins (HmuV), two transmembrane proteins (HmuU) and a solute-binding protein (HmuT).

The protein resides in the cell inner membrane. Functionally, part of the ABC transporter complex HmuTUV involved in hemin import. Responsible for energy coupling to the transport system. This Myxococcus xanthus (strain DK1622) protein is Hemin import ATP-binding protein HmuV.